The chain runs to 594 residues: DEAD-box ATP-dependent RNA helicase 25 (594 aa).

Disordered regions lie at residues 56 to 80 (RSGGAAVPKRRRSRRDAEEEEEEGL) and 92 to 121 (GVREEGVAEGEAPEFDAAKSGDESGGVDGS). Residues 126–154 (TRFDQCTISPLSLKAVKDAGYERMTQVQE) carry the Q motif motif. Positions 157-340 (LPVILQGKDV…HIAMKKNYKF (184 aa)) constitute a Helicase ATP-binding domain. 170–177 (AKTGTGKT) provides a ligand contact to ATP. The DEAD box signature appears at 288–291 (DEAD). The region spanning 370 to 520 (ILYDVLKKHV…SVDSSTQTIV (151 aa)) is the Helicase C-terminal domain.

It belongs to the DEAD box helicase family.

The catalysed reaction is ATP + H2O = ADP + phosphate + H(+). The protein is DEAD-box ATP-dependent RNA helicase 25 of Oryza sativa subsp. japonica (Rice).